Consider the following 101-residue polypeptide: Small ribosomal subunit protein uS14 (101 aa).

The protein belongs to the universal ribosomal protein uS14 family. Part of the 30S ribosomal subunit. Contacts proteins S3 and S10.

In terms of biological role, binds 16S rRNA, required for the assembly of 30S particles and may also be responsible for determining the conformation of the 16S rRNA at the A site. The protein is Small ribosomal subunit protein uS14 of Colwellia psychrerythraea (strain 34H / ATCC BAA-681) (Vibrio psychroerythus).